Here is a 230-residue protein sequence, read N- to C-terminus: uncharacterized protein (230 aa).

Belongs to the transferase hexapeptide repeat family.

This is an uncharacterized protein from Escherichia coli O6:K15:H31 (strain 536 / UPEC).